The sequence spans 177 residues: GTP-dependent dephospho-CoA kinase (177 aa).

Residues Asp48, Val49, Val50, Asp67, Lys69, and Glu124 each coordinate GTP.

Belongs to the GTP-dependent DPCK family.

The catalysed reaction is 3'-dephospho-CoA + GTP = GDP + CoA + H(+). It functions in the pathway cofactor biosynthesis; coenzyme A biosynthesis. Its function is as follows. Catalyzes the GTP-dependent phosphorylation of the 3'-hydroxyl group of dephosphocoenzyme A to form coenzyme A (CoA). In Pyrococcus furiosus (strain ATCC 43587 / DSM 3638 / JCM 8422 / Vc1), this protein is GTP-dependent dephospho-CoA kinase.